A 304-amino-acid polypeptide reads, in one-letter code: Small ribosomal subunit protein uS2 (304 aa).

Serine 2 is subject to N-acetylserine. Laminin-binding stretches follow at residues 161–180 (IPCN…MLAR) and 205–229 (RDPE…EFQG). [DE]-W-[ST] repeat units lie at residues 230–232 (EWS), 245–247 (DWS), 275–277 (DWS), 284–286 (DWS), and 302–304 (DWS). The tract at residues 242 to 304 (EVADWSEGVA…DWGGATSDWS (63 aa)) is laminin-binding. The tract at residues 257-304 (IQQFPAGTPAPAPAVKTEDWSTQPATEDWSTAPTAQASDWGGATSDWS) is disordered. Over residues 276 to 293 (WSTQPATEDWSTAPTAQA) the composition is skewed to polar residues.

It belongs to the universal ribosomal protein uS2 family. In terms of assembly, monomer (37LRP) and homodimer (67LR). Component of the small ribosomal subunit. Mature ribosomes consist of a small (40S) and a large (60S) subunit. The 40S subunit contains about 33 different proteins and 1 molecule of RNA (18S). The 60S subunit contains about 49 different proteins and 3 molecules of RNA (28S, 5.8S and 5S). Interacts with rps21. Interacts with several laminins including at least lamb1. Interacts with mdk. Acylated. Acylation may be a prerequisite for conversion of the monomeric 37 kDa laminin receptor precursor (37LRP) to the mature dimeric 67 kDa laminin receptor (67LR), and may provide a mechanism for membrane association. In terms of processing, cleaved by stromelysin-3 (ST3) at the cell surface. Cleavage by stromelysin-3 may be a mechanism to alter cell-extracellular matrix interactions.

It is found in the cell membrane. The protein localises to the cytoplasm. Its subcellular location is the nucleus. Functionally, required for the assembly and/or stability of the 40S ribosomal subunit. Required for the processing of the 20S rRNA-precursor to mature 18S rRNA in a late step of the maturation of 40S ribosomal subunits. Also functions as a cell surface receptor for laminin. Plays a role in cell adhesion to the basement membrane and in the consequent activation of signaling transduction pathways. May play a role in cell fate determination and tissue morphogenesis. The sequence is that of Small ribosomal subunit protein uS2 (rpsa) from Sparus aurata (Gilthead sea bream).